A 367-amino-acid chain; its full sequence is Histidinol-phosphate aminotransferase 1 (367 aa).

N6-(pyridoxal phosphate)lysine is present on Lys-229.

The protein belongs to the class-II pyridoxal-phosphate-dependent aminotransferase family. Histidinol-phosphate aminotransferase subfamily. As to quaternary structure, homodimer. The cofactor is pyridoxal 5'-phosphate.

The enzyme catalyses L-histidinol phosphate + 2-oxoglutarate = 3-(imidazol-4-yl)-2-oxopropyl phosphate + L-glutamate. It participates in amino-acid biosynthesis; L-histidine biosynthesis; L-histidine from 5-phospho-alpha-D-ribose 1-diphosphate: step 7/9. The chain is Histidinol-phosphate aminotransferase 1 from Idiomarina loihiensis (strain ATCC BAA-735 / DSM 15497 / L2-TR).